The chain runs to 559 residues: SH3 domain-binding protein 2 (559 aa).

In terms of domain architecture, PH spans 26-130 (GVAKAGYLHK…WMAFVRREIG (105 aa)). The interval 164-449 (LSSYPMDNED…EDSDEDYEKV (286 aa)) is disordered. A compositionally biased stretch (acidic residues) spans 170-184 (DNEDYEHEDEDDSYL). 2 positions are modified to phosphotyrosine; by SYK: Tyr174 and Tyr183. The SH3-binding motif lies at 201-210 (PPAYPPPPVP). 2 stretches are compositionally biased toward pro residues: residues 202-213 (PAYPPPPVPVPR) and 233-242 (PLLPPPPPKR). Over residues 252–265 (EDAKDALGLRRVEP) the composition is skewed to basic and acidic residues. Ser277 carries the post-translational modification Phosphoserine. A compositionally biased stretch (low complexity) spans 313–327 (TSSVSSSTTMAVATS). A compositionally biased stretch (basic and acidic residues) spans 360–371 (KIAEEPSPREAA). Over residues 375 to 386 (PVPPVAPRPPVQ) the composition is skewed to pro residues. A phosphoserine mark is found at Ser414 and Ser425. Residues 437–446 (TGEEDSDEDY) are compositionally biased toward acidic residues. Tyr446 carries the post-translational modification Phosphotyrosine; by SYK. Residues 455–553 (VFVNTTESCE…HQSLLLRHPY (99 aa)) enclose the SH2 domain.

Phosphorylated. Phosphorylation at Tyr-446 may stimulate the activity of the LYN kinase.

Binds differentially to the SH3 domains of certain proteins of signal transduction pathways. Binds to phosphatidylinositols; linking the hemopoietic tyrosine kinase fes to the cytoplasmic membrane in a phosphorylation dependent mechanism. The polypeptide is SH3 domain-binding protein 2 (Sh3bp2) (Mus musculus (Mouse)).